The chain runs to 360 residues: MVSKQAFLFSLGSLYLSLLFVFLLMDVYARPANNSALKVEGKEKATDNKDENEIMPPDHLNGVKMEMDGHLNKEFHQEVFLGKEIEEFDEDSEPRRNRRKLAAIFAKVDRNEDKQISANEMQRWIMEKTEEHFQEAVNENKLHFRAVDPDGDGHVSWDEYKIKFLASKGFNEKEVAEKLKNNEDLKIDEETQEVLDNLKDRWFQADNPPADQLLNEEEFLSFLHPEHSQGMLKFMVKEIIRDLDQDGDKKLTLSEFISLPVGTVENQQAQDIDDDWVRDRKKEYEEVIDANHDGIVTMEELEEYMDPMNEYNALNEAKQMIAVADENQDHHLSLEEILKYSEYFTGSKLMDYARNVHEEF.

An N-terminal signal peptide occupies residues 1–29; sequence MVSKQAFLFSLGSLYLSLLFVFLLMDVYA. A glycan (N-linked (GlcNAc...) asparagine) is linked at Asn-33. 5 EF-hand domains span residues 96 to 131, 135 to 170, 231 to 266, 276 to 311, and 312 to 347; these read RNRRKLAAIFAKVDRNEDKQISANEMQRWIMEKTEE, EAVNENKLHFRAVDPDGDGHVSWDEYKIKFLASKGF, MLKFMVKEIIRDLDQDGDKKLTLSEFISLPVGTVEN, WVRDRKKEYEEVIDANHDGIVTMEELEEYMDPMNEY, and NALNEAKQMIAVADENQDHHLSLEEILKYSEYFTGS. Ca(2+) is bound by residues Asp-109, Asn-111, Asp-113, Gln-115, Glu-120, Asp-148, Asp-150, Asp-152, His-154, Glu-159, Asp-244, Asp-246, Asp-248, Lys-250, Glu-255, Asp-289, Asn-291, Asp-293, Glu-300, Asp-325, Asn-327, Asp-329, His-331, and Glu-336.

This sequence belongs to the CREC family.

The protein resides in the golgi apparatus lumen. Functionally, may regulate calcium-dependent activities in the endoplasmic reticulum lumen or post-ER compartment. This Xenopus tropicalis (Western clawed frog) protein is 45 kDa calcium-binding protein (sdf4).